The primary structure comprises 588 residues: Succinate dehydrogenase flavoprotein subunit (588 aa).

FAD is bound by residues 14-19 (GAGGAG), 37-52 (SKVF…AQGG), and Asp221. His45 carries the tele-8alpha-FAD histidine modification. Residues His242 and Thr254 each coordinate substrate. Position 267 is an N6-acetyllysine (Lys267). Arg286 acts as the Proton acceptor in catalysis. His354 serves as a coordination point for substrate. Glu388 is a binding site for FAD. Arg399 contributes to the substrate binding site. FAD is bound at residue 404–405 (SL).

It belongs to the FAD-dependent oxidoreductase 2 family. FRD/SDH subfamily. As to quaternary structure, part of an enzyme complex containing four subunits: a flavoprotein, an iron-sulfur, cytochrome b-556, and a hydrophobic anchor protein. The complex forms trimers. Requires FAD as cofactor.

Its subcellular location is the cell inner membrane. It catalyses the reaction a quinone + succinate = fumarate + a quinol. It functions in the pathway carbohydrate metabolism; tricarboxylic acid cycle; fumarate from succinate (bacterial route): step 1/1. Two distinct, membrane-bound, FAD-containing enzymes are responsible for the catalysis of fumarate and succinate interconversion; the fumarate reductase is used in anaerobic growth, and the succinate dehydrogenase is used in aerobic growth. The protein is Succinate dehydrogenase flavoprotein subunit (sdhA) of Escherichia coli O157:H7.